A 454-amino-acid polypeptide reads, in one-letter code: Trigger factor (454 aa).

Residues 169–261 (GDVAIADYEG…LKELKSRELP (93 aa)) enclose the PPIase FKBP-type domain.

It belongs to the FKBP-type PPIase family. Tig subfamily.

The protein localises to the cytoplasm. The enzyme catalyses [protein]-peptidylproline (omega=180) = [protein]-peptidylproline (omega=0). Its function is as follows. Involved in protein export. Acts as a chaperone by maintaining the newly synthesized protein in an open conformation. Functions as a peptidyl-prolyl cis-trans isomerase. The protein is Trigger factor of Picosynechococcus sp. (strain ATCC 27264 / PCC 7002 / PR-6) (Agmenellum quadruplicatum).